The primary structure comprises 30 residues: Truncated interleukin-1-binding protein (30 aa).

The signal sequence occupies residues 1 to 18 (MSILPVIFLPIFFYSSFV).

The protein belongs to the interleukin-1 receptor family.

This Vaccinia virus (strain Copenhagen) (VACV) protein is Truncated interleukin-1-binding protein.